We begin with the raw amino-acid sequence, 390 residues long: Dual-specificity RNA methyltransferase RlmN (390 aa).

The Proton acceptor role is filled by Glu110. The 240-residue stretch at 116–355 folds into the Radical SAM core domain; sequence EADRATLCVS…VIIRKTRGDD (240 aa). Cysteines 123 and 360 form a disulfide. Residues Cys130, Cys134, and Cys137 each coordinate [4Fe-4S] cluster. S-adenosyl-L-methionine is bound by residues 184–185, Ser216, 238–240, and Asn317; these read GE and SLH. Cys360 serves as the catalytic S-methylcysteine intermediate.

The protein belongs to the radical SAM superfamily. RlmN family. [4Fe-4S] cluster serves as cofactor.

It localises to the cytoplasm. The enzyme catalyses adenosine(2503) in 23S rRNA + 2 reduced [2Fe-2S]-[ferredoxin] + 2 S-adenosyl-L-methionine = 2-methyladenosine(2503) in 23S rRNA + 5'-deoxyadenosine + L-methionine + 2 oxidized [2Fe-2S]-[ferredoxin] + S-adenosyl-L-homocysteine. It catalyses the reaction adenosine(37) in tRNA + 2 reduced [2Fe-2S]-[ferredoxin] + 2 S-adenosyl-L-methionine = 2-methyladenosine(37) in tRNA + 5'-deoxyadenosine + L-methionine + 2 oxidized [2Fe-2S]-[ferredoxin] + S-adenosyl-L-homocysteine. Functionally, specifically methylates position 2 of adenine 2503 in 23S rRNA and position 2 of adenine 37 in tRNAs. m2A2503 modification seems to play a crucial role in the proofreading step occurring at the peptidyl transferase center and thus would serve to optimize ribosomal fidelity. In Haemophilus influenzae (strain PittEE), this protein is Dual-specificity RNA methyltransferase RlmN.